Reading from the N-terminus, the 203-residue chain is ATP-dependent Clp protease proteolytic subunit (203 aa).

The active-site Nucleophile is Ser107. His132 is an active-site residue.

It belongs to the peptidase S14 family. Fourteen ClpP subunits assemble into 2 heptameric rings which stack back to back to give a disk-like structure with a central cavity, resembling the structure of eukaryotic proteasomes.

The protein resides in the cytoplasm. It carries out the reaction Hydrolysis of proteins to small peptides in the presence of ATP and magnesium. alpha-casein is the usual test substrate. In the absence of ATP, only oligopeptides shorter than five residues are hydrolyzed (such as succinyl-Leu-Tyr-|-NHMec, and Leu-Tyr-Leu-|-Tyr-Trp, in which cleavage of the -Tyr-|-Leu- and -Tyr-|-Trp bonds also occurs).. Functionally, cleaves peptides in various proteins in a process that requires ATP hydrolysis. Has a chymotrypsin-like activity. Plays a major role in the degradation of misfolded proteins. The protein is ATP-dependent Clp protease proteolytic subunit of Shewanella loihica (strain ATCC BAA-1088 / PV-4).